The following is a 113-amino-acid chain: Venom protein 184 (113 aa).

The signal sequence occupies residues 1–21 (MKTTLIFCILGIVIPTAVVSS).

In terms of processing, contains 3 disulfide bonds. In terms of tissue distribution, expressed by the venom gland.

It localises to the secreted. In Lychas mucronatus (Chinese swimming scorpion), this protein is Venom protein 184.